Here is a 310-residue protein sequence, read N- to C-terminus: Ferredoxin--NADP reductase (310 aa).

FAD is bound by residues D26, Q34, Y39, V78, F108, D268, and T308.

This sequence belongs to the ferredoxin--NADP reductase type 2 family. Homodimer. The cofactor is FAD.

It carries out the reaction 2 reduced [2Fe-2S]-[ferredoxin] + NADP(+) + H(+) = 2 oxidized [2Fe-2S]-[ferredoxin] + NADPH. This is Ferredoxin--NADP reductase from Lactobacillus helveticus (strain DPC 4571).